We begin with the raw amino-acid sequence, 421 residues long: MFTIITGAQFGDEGKGKIVDLLAEKYDIIARFQGGDNAGHTVKVGDKTYKLHLVPSGVLFDKRLLIGPGVVLNPKVLWEELQTLWGMGMKVDLGIDPKTSIIMPYHIEMDALREKARTAKIGTTRRGIGYAYIDKIAREEVQMADITDPEMLKRKLEEIAPAKESAIKEMGGDPSVVRDEAQLRAYLEIGRALKNNLTDVSLEINRALDEDKMVLAEGAQGAFLDVIHGTQKFVTSSFTTAGSACANLGVGPVRVDNVVGVVKAYITRVGEGPMPTELKDEIGDRLREAGGEYGTTTGRPRRCGWFDAVLGRKAVYLNGYTELALTKLDVLTGLRRIKICVAYELDGEILEYPPESTYELARCVPVYEEMEGWSESISEALDYSDLPQNARAYVERIQELMDVDIAAISVGPAREQTIYME.

Residues 11–17 (GDEGKGK) and 39–41 (GHT) contribute to the GTP site. Asp-12 serves as the catalytic Proton acceptor. Mg(2+)-binding residues include Asp-12 and Gly-39. IMP-binding positions include 12–15 (DEGK), 37–40 (NAGH), Thr-124, Arg-138, Gln-220, Thr-235, and Arg-299. Catalysis depends on His-40, which acts as the Proton donor. 295–301 (TTTGRPR) contributes to the substrate binding site. GTP contacts are provided by residues Arg-301, 327-329 (KLD), and 409-411 (SVG).

This sequence belongs to the adenylosuccinate synthetase family. As to quaternary structure, homodimer. Requires Mg(2+) as cofactor.

Its subcellular location is the cytoplasm. It carries out the reaction IMP + L-aspartate + GTP = N(6)-(1,2-dicarboxyethyl)-AMP + GDP + phosphate + 2 H(+). It functions in the pathway purine metabolism; AMP biosynthesis via de novo pathway; AMP from IMP: step 1/2. Plays an important role in the de novo pathway of purine nucleotide biosynthesis. Catalyzes the first committed step in the biosynthesis of AMP from IMP. This is Adenylosuccinate synthetase from Methanothrix thermoacetophila (strain DSM 6194 / JCM 14653 / NBRC 101360 / PT) (Methanosaeta thermophila).